Consider the following 261-residue polypeptide: 2-phytyl-1,4-beta-naphthoquinone methyltransferase, chloroplastic (261 aa).

A chloroplast-targeting transit peptide spans 1-30; that stretch reads MAALLGIVSPVTFTGKHPVNSRSRRRTVVK.

Belongs to the class I-like SAM-binding methyltransferase superfamily. MenG/UbiE family.

Its subcellular location is the plastid. The protein localises to the chloroplast. The catalysed reaction is demethylphylloquinol + S-adenosyl-L-methionine = phylloquinol + S-adenosyl-L-homocysteine + H(+). Functionally, involved in the biosynthesis of phylloquinone (vitamin K1). Methyltransferase required for the conversion of 2-phytyl-1,4-beta-naphthoquinol to phylloquinol. This chain is 2-phytyl-1,4-beta-naphthoquinone methyltransferase, chloroplastic, found in Arabidopsis thaliana (Mouse-ear cress).